A 251-amino-acid chain; its full sequence is Sugar fermentation stimulation protein homolog (251 aa).

This sequence belongs to the SfsA family.

This chain is Sugar fermentation stimulation protein homolog, found in Prochlorococcus marinus (strain SARG / CCMP1375 / SS120).